We begin with the raw amino-acid sequence, 282 residues long: Putative phosphoenolpyruvate synthase regulatory protein (282 aa).

An ADP-binding site is contributed by Gly-161 to Thr-168.

The protein belongs to the pyruvate, phosphate/water dikinase regulatory protein family. PSRP subfamily.

It carries out the reaction [pyruvate, water dikinase] + ADP = [pyruvate, water dikinase]-phosphate + AMP + H(+). The enzyme catalyses [pyruvate, water dikinase]-phosphate + phosphate + H(+) = [pyruvate, water dikinase] + diphosphate. Its function is as follows. Bifunctional serine/threonine kinase and phosphorylase involved in the regulation of the phosphoenolpyruvate synthase (PEPS) by catalyzing its phosphorylation/dephosphorylation. The polypeptide is Putative phosphoenolpyruvate synthase regulatory protein (Janthinobacterium sp. (strain Marseille) (Minibacterium massiliensis)).